The chain runs to 283 residues: Aldo-keto reductase Mmcs_1938 (283 aa).

The Proton donor role is filled by Tyr58. NADPH contacts are provided by Gly196, Leu198, Val200, Ile236, Arg238, Ser239, Ala240, Arg244, Ser247, Asn248, and Arg274.

It belongs to the aldo/keto reductase family.

The sequence is that of Aldo-keto reductase Mmcs_1938 from Mycobacterium sp. (strain MCS).